A 170-amino-acid polypeptide reads, in one-letter code: UPF0260 protein RPB_3505 (170 aa).

The protein belongs to the UPF0260 family.

The polypeptide is UPF0260 protein RPB_3505 (Rhodopseudomonas palustris (strain HaA2)).